Here is a 286-residue protein sequence, read N- to C-terminus: Protease HtpX (286 aa).

2 consecutive transmembrane segments (helical) span residues 4-24 (ILLF…ILSL) and 33-53 (TGLL…SLFL). His-139 is a Zn(2+) binding site. Residue Glu-140 is part of the active site. Zn(2+) is bound at residue His-143. The next 2 membrane-spanning stretches (helical) occupy residues 147–167 (GDMV…IFVS) and 186–206 (IYFL…SMIA). Glu-214 lines the Zn(2+) pocket.

Belongs to the peptidase M48B family. Zn(2+) serves as cofactor.

The protein resides in the cell inner membrane. The chain is Protease HtpX from Pasteurella multocida (strain Pm70).